Here is a 278-residue protein sequence, read N- to C-terminus: Large ribosomal subunit protein uL2 (278 aa).

Positions 201 to 278 (HGNINDGKAG…IMRSRHQKKK (78 aa)) are disordered. Positions 210–221 (GRSRWRGKRPHV) are enriched in basic residues.

The protein belongs to the universal ribosomal protein uL2 family. As to quaternary structure, part of the 50S ribosomal subunit. Forms a bridge to the 30S subunit in the 70S ribosome.

In terms of biological role, one of the primary rRNA binding proteins. Required for association of the 30S and 50S subunits to form the 70S ribosome, for tRNA binding and peptide bond formation. It has been suggested to have peptidyltransferase activity; this is somewhat controversial. Makes several contacts with the 16S rRNA in the 70S ribosome. The protein is Large ribosomal subunit protein uL2 of Allorhizobium ampelinum (strain ATCC BAA-846 / DSM 112012 / S4) (Agrobacterium vitis (strain S4)).